Reading from the N-terminus, the 171-residue chain is Large ribosomal subunit protein uL10 (171 aa).

It belongs to the universal ribosomal protein uL10 family. Part of the ribosomal stalk of the 50S ribosomal subunit. The N-terminus interacts with L11 and the large rRNA to form the base of the stalk. The C-terminus forms an elongated spine to which L12 dimers bind in a sequential fashion forming a multimeric L10(L12)X complex.

Forms part of the ribosomal stalk, playing a central role in the interaction of the ribosome with GTP-bound translation factors. This Nitrosomonas eutropha (strain DSM 101675 / C91 / Nm57) protein is Large ribosomal subunit protein uL10.